We begin with the raw amino-acid sequence, 118 residues long: Large ribosomal subunit protein bL17 (118 aa).

This sequence belongs to the bacterial ribosomal protein bL17 family. As to quaternary structure, part of the 50S ribosomal subunit. Contacts protein L32.

This Gemmatimonas aurantiaca (strain DSM 14586 / JCM 11422 / NBRC 100505 / T-27) protein is Large ribosomal subunit protein bL17.